Reading from the N-terminus, the 350-residue chain is Ubiquitin carboxyl-terminal hydrolase 11 (350 aa).

Positions 49–344 constitute a USP domain; the sequence is KGLYNVSGND…SACLLFYEME (296 aa). C59 serves as the catalytic Nucleophile. The Proton acceptor role is filled by H302.

The protein belongs to the peptidase C19 family.

The catalysed reaction is Thiol-dependent hydrolysis of ester, thioester, amide, peptide and isopeptide bonds formed by the C-terminal Gly of ubiquitin (a 76-residue protein attached to proteins as an intracellular targeting signal).. This is Ubiquitin carboxyl-terminal hydrolase 11 (ubp11) from Schizosaccharomyces pombe (strain 972 / ATCC 24843) (Fission yeast).